The primary structure comprises 81 residues: RNA-binding protein KhpA (81 aa).

In terms of domain architecture, KH spans Lys-34 to Asp-81.

It belongs to the KhpA RNA-binding protein family. In terms of assembly, forms a complex with KhpB.

The protein resides in the cytoplasm. Its function is as follows. A probable RNA chaperone. Forms a complex with KhpB which binds to cellular RNA and controls its expression. Plays a role in peptidoglycan (PG) homeostasis and cell length regulation. The polypeptide is RNA-binding protein KhpA (Bacillus subtilis (strain 168)).